A 526-amino-acid chain; its full sequence is Cytochrome P450 monooxygenase patI (526 aa).

Over 1-6 the chain is Cytoplasmic; it reads MDILQL. Residues 7-29 form a helical membrane-spanning segment; that stretch reads APTHLLAILLSSTSALFLITYLL. The Lumenal portion of the chain corresponds to 30–526; the sequence is RAGHRPSDLP…EAQEVFARFD (497 aa). N-linked (GlcNAc...) asparagine glycosylation occurs at Asn81. Residue Cys446 participates in heme binding.

Belongs to the cytochrome P450 family. Heme is required as a cofactor.

The protein localises to the endoplasmic reticulum membrane. The enzyme catalyses 3-hydroxybenzyl alcohol + reduced [NADPH--hemoprotein reductase] + O2 = gentisyl alcohol + oxidized [NADPH--hemoprotein reductase] + H2O + H(+). Its pathway is mycotoxin biosynthesis; patulin biosynthesis. Cytochrome P450 monooxygenase; part of the gene cluster that mediates the biosynthesis of patulin, an acetate-derived tetraketide mycotoxin produced by several fungal species that shows antimicrobial properties against several bacteria. PatI catalyzes the conversion of m-hydroxybenzyl alcohol into gentisyl alcohol. The pathway begins with the synthesis of 6-methylsalicylic acid by the polyketide synthase (PKS) patK via condensation of acetate and malonate units. The 6-methylsalicylic acid decarboxylase patG then catalyzes the decarboxylation of 6-methylsalicylic acid to yield m-cresol (also known as 3-methylphenol). These first reactions occur in the cytosol. The intermediate m-cresol is then transported into the endoplasmic reticulum where the cytochrome P450 monooxygenase patH converts it to m-hydroxybenzyl alcohol, which is further converted to gentisyl alcohol by the cytochrome P450 monooxygenase patI. The oxidoreductases patJ and patO further convert gentisyl alcohol to isoepoxydon in the vacuole. PatN catalyzes then the transformation of isoepoxydon into phyllostine. The cluster protein patF is responsible for the conversion from phyllostine to neopatulin whereas the alcohol dehydrogenase patD converts neopatulin to E-ascladiol. The steps between isoepoxydon and E-ascladiol occur in the cytosol, and E-ascladiol is probably secreted to the extracellular space by one of the cluster-specific transporters patC or patM. Finally, the secreted patulin synthase patE catalyzes the conversion of E-ascladiol to patulin. The sequence is that of Cytochrome P450 monooxygenase patI from Penicillium expansum (Blue mold rot fungus).